The following is a 445-amino-acid chain: MRALVLAAGKGTRMKSKIPKVLHPLSGKPMIEWVVETAGKVAQKVGVVLGFEAELVRKTLPEWVDVFVQEEQLGTAHAVMCAKDFIEPGDDVLILYGDVPLISENTLKRMIEEHRKGADVTILVADLEDPSGYGRVIQDGDKYRIIEDADLPEELKSVTTINTGFYVFSGDFLLRALPEIKNENAKGEYYLTDAVNFAEKVRVVKTDDLLEITGVNTRKTLVWLEEQLRMRKIEELLENGVTILDPATTYIHYSVEIGMDTVIHPMTFIEGKSRVGENCEIGPMTRIVDCEIGNNVKITRSECFKSVIEDDVSVGPFARLREGTILKKSSKIGNFVEIKKSTIGEGTKAQHLSYIGDAFVGKNVNIGAGTITCNYDGKKKNPTFIEDGAFIGSNSSLVAPVRIGEGALIGAGSVITEDVPPYSLGLGRAMQVVKEGWVLKKRKEE.

The segment at 1 to 218 is pyrophosphorylase; the sequence is MRALVLAAGK…LLEITGVNTR (218 aa). UDP-N-acetyl-alpha-D-glucosamine contacts are provided by residues 6–9, lysine 20, glutamine 69, 74–75, 96–98, glycine 134, glutamate 147, asparagine 162, and asparagine 216; these read LAAG, GT, and YGD. Position 98 (aspartate 98) interacts with Mg(2+). Asparagine 216 is a binding site for Mg(2+). Residues 219-239 form a linker region; sequence KTLVWLEEQLRMRKIEELLEN. The N-acetyltransferase stretch occupies residues 240 to 445; it reads GVTILDPATT…GWVLKKRKEE (206 aa). The UDP-N-acetyl-alpha-D-glucosamine site is built by arginine 321 and lysine 339. Histidine 351 (proton acceptor) is an active-site residue. 2 residues coordinate UDP-N-acetyl-alpha-D-glucosamine: tyrosine 354 and asparagine 365. Acetyl-CoA contacts are provided by residues alanine 368, 374-375, serine 393, alanine 411, and arginine 428; that span reads NY.

The protein in the N-terminal section; belongs to the N-acetylglucosamine-1-phosphate uridyltransferase family. In the C-terminal section; belongs to the transferase hexapeptide repeat family. In terms of assembly, homotrimer. The cofactor is Mg(2+).

Its subcellular location is the cytoplasm. It catalyses the reaction alpha-D-glucosamine 1-phosphate + acetyl-CoA = N-acetyl-alpha-D-glucosamine 1-phosphate + CoA + H(+). The catalysed reaction is N-acetyl-alpha-D-glucosamine 1-phosphate + UTP + H(+) = UDP-N-acetyl-alpha-D-glucosamine + diphosphate. The protein operates within nucleotide-sugar biosynthesis; UDP-N-acetyl-alpha-D-glucosamine biosynthesis; N-acetyl-alpha-D-glucosamine 1-phosphate from alpha-D-glucosamine 6-phosphate (route II): step 2/2. It participates in nucleotide-sugar biosynthesis; UDP-N-acetyl-alpha-D-glucosamine biosynthesis; UDP-N-acetyl-alpha-D-glucosamine from N-acetyl-alpha-D-glucosamine 1-phosphate: step 1/1. It functions in the pathway bacterial outer membrane biogenesis; LPS lipid A biosynthesis. In terms of biological role, catalyzes the last two sequential reactions in the de novo biosynthetic pathway for UDP-N-acetylglucosamine (UDP-GlcNAc). The C-terminal domain catalyzes the transfer of acetyl group from acetyl coenzyme A to glucosamine-1-phosphate (GlcN-1-P) to produce N-acetylglucosamine-1-phosphate (GlcNAc-1-P), which is converted into UDP-GlcNAc by the transfer of uridine 5-monophosphate (from uridine 5-triphosphate), a reaction catalyzed by the N-terminal domain. The polypeptide is Bifunctional protein GlmU (Thermotoga sp. (strain RQ2)).